We begin with the raw amino-acid sequence, 297 residues long: uncharacterized protein (297 aa).

Residues 1 to 44 form a disordered region; it reads MQKSKSIFIPKAFAPQQQAQAPPSKLDNKDPSVEGEGASKPKDD. Low complexity predominate over residues 10–23; that stretch reads PKAFAPQQQAQAPP. The segment covering 26–44 has biased composition (basic and acidic residues); that stretch reads LDNKDPSVEGEGASKPKDD.

This is an uncharacterized protein from Invertebrate iridescent virus 3 (IIV-3).